A 212-amino-acid polypeptide reads, in one-letter code: Thymidylate kinase (212 aa).

11–18 (GPEGAGKT) is a binding site for ATP.

Belongs to the thymidylate kinase family.

The catalysed reaction is dTMP + ATP = dTDP + ADP. In terms of biological role, phosphorylation of dTMP to form dTDP in both de novo and salvage pathways of dTTP synthesis. The sequence is that of Thymidylate kinase from Streptococcus pneumoniae serotype 2 (strain D39 / NCTC 7466).